Consider the following 142-residue polypeptide: Small ribosomal subunit protein uS12 (142 aa).

Residues 1–44 (MANGKYAARKLKQDRQQRRWSDSEYARRERGLGAKSDPLEGAPQ) form a disordered region. Residues 11–32 (LKQDRQQRRWSDSEYARRERGL) are compositionally biased toward basic and acidic residues.

This sequence belongs to the universal ribosomal protein uS12 family. In terms of assembly, part of the 30S ribosomal subunit.

Its function is as follows. With S4 and S5 plays an important role in translational accuracy. Located at the interface of the 30S and 50S subunits. The sequence is that of Small ribosomal subunit protein uS12 from Haloquadratum walsbyi (strain DSM 16790 / HBSQ001).